Consider the following 306-residue polypeptide: Acetaldehyde dehydrogenase (306 aa).

Cys131 serves as the catalytic Acyl-thioester intermediate. NAD(+)-binding positions include 162–170 and Asn273; that span reads SAGPGTRKN.

This sequence belongs to the acetaldehyde dehydrogenase family.

It catalyses the reaction acetaldehyde + NAD(+) + CoA = acetyl-CoA + NADH + H(+). The chain is Acetaldehyde dehydrogenase from Albidiferax ferrireducens (strain ATCC BAA-621 / DSM 15236 / T118) (Rhodoferax ferrireducens).